Consider the following 286-residue polypeptide: MLSLDAARDFNGHIVNADSMQLYRDMDIGTAKLSHSARQGIPHHQIDVIDPSSEASVARYKLSAQTCIKHIHALNSIPFLVGGSGLYVSSVVHNLQFPPTDGRVRKLLEDEADKSGIGVLHDRLLKLHPGFTVSRGNRRRIIRALEVAYITGRSPNPVLPLQNRANNFIVINLICDKGTLDIRLQKRVESFYDNGLIDEVRLLQEKYVLGRTAAKAIGYKQAIMYLAGEISCADAKDSTLQETIRLANKQIKWFRRYSGQHIVDTTDMSVAYEQIRSILNKSFRIS.

An interaction with substrate tRNA region spans residues 18–21; that stretch reads DSMQ.

Belongs to the IPP transferase family. Monomer. It depends on Mg(2+) as a cofactor.

It carries out the reaction adenosine(37) in tRNA + dimethylallyl diphosphate = N(6)-dimethylallyladenosine(37) in tRNA + diphosphate. In terms of biological role, catalyzes the transfer of a dimethylallyl group onto the adenine at position 37 in tRNAs that read codons beginning with uridine, leading to the formation of N6-(dimethylallyl)adenosine (i(6)A). The protein is tRNA dimethylallyltransferase of Tropheryma whipplei (strain TW08/27) (Whipple's bacillus).